The primary structure comprises 455 residues: Exodeoxyribonuclease 7 large subunit (455 aa).

The protein belongs to the XseA family. In terms of assembly, heterooligomer composed of large and small subunits.

The protein resides in the cytoplasm. The enzyme catalyses Exonucleolytic cleavage in either 5'- to 3'- or 3'- to 5'-direction to yield nucleoside 5'-phosphates.. Its function is as follows. Bidirectionally degrades single-stranded DNA into large acid-insoluble oligonucleotides, which are then degraded further into small acid-soluble oligonucleotides. The sequence is that of Exodeoxyribonuclease 7 large subunit from Oceanobacillus iheyensis (strain DSM 14371 / CIP 107618 / JCM 11309 / KCTC 3954 / HTE831).